The chain runs to 158 residues: Transcription elongation factor GreA (158 aa).

The stretch at 10–75 (TKEGKEKLEQ…QMLENMIRNA (66 aa)) forms a coiled coil.

The protein belongs to the GreA/GreB family.

Necessary for efficient RNA polymerase transcription elongation past template-encoded arresting sites. The arresting sites in DNA have the property of trapping a certain fraction of elongating RNA polymerases that pass through, resulting in locked ternary complexes. Cleavage of the nascent transcript by cleavage factors such as GreA or GreB allows the resumption of elongation from the new 3'terminus. GreA releases sequences of 2 to 3 nucleotides. The protein is Transcription elongation factor GreA of Geobacillus kaustophilus (strain HTA426).